Here is a 364-residue protein sequence, read N- to C-terminus: Aminomethyltransferase (364 aa).

The protein belongs to the GcvT family. The glycine cleavage system is composed of four proteins: P, T, L and H.

The enzyme catalyses N(6)-[(R)-S(8)-aminomethyldihydrolipoyl]-L-lysyl-[protein] + (6S)-5,6,7,8-tetrahydrofolate = N(6)-[(R)-dihydrolipoyl]-L-lysyl-[protein] + (6R)-5,10-methylene-5,6,7,8-tetrahydrofolate + NH4(+). Its function is as follows. The glycine cleavage system catalyzes the degradation of glycine. The sequence is that of Aminomethyltransferase from Escherichia coli O81 (strain ED1a).